The chain runs to 517 residues: ATP synthase subunit alpha (517 aa).

Position 174–181 (174–181 (GDRQTGKT)) interacts with ATP.

It belongs to the ATPase alpha/beta chains family. In terms of assembly, F-type ATPases have 2 components, CF(1) - the catalytic core - and CF(0) - the membrane proton channel. CF(1) has five subunits: alpha(3), beta(3), gamma(1), delta(1), epsilon(1). CF(0) has three main subunits: a(1), b(2) and c(9-12). The alpha and beta chains form an alternating ring which encloses part of the gamma chain. CF(1) is attached to CF(0) by a central stalk formed by the gamma and epsilon chains, while a peripheral stalk is formed by the delta and b chains.

The protein localises to the cell inner membrane. The catalysed reaction is ATP + H2O + 4 H(+)(in) = ADP + phosphate + 5 H(+)(out). Functionally, produces ATP from ADP in the presence of a proton gradient across the membrane. The alpha chain is a regulatory subunit. This chain is ATP synthase subunit alpha, found in Polaromonas sp. (strain JS666 / ATCC BAA-500).